We begin with the raw amino-acid sequence, 268 residues long: Helix-loop-helix protein 25 (268 aa).

Polar residues predominate over residues Met-1–Ser-23. Residues Met-1–Arg-29 form a disordered region. Residues Glu-92–Arg-105 are basic motif. One can recognise a bHLH domain in the interval Glu-92–Asn-149. The tract at residues Lys-106–Asn-149 is helix-loop-helix motif.

The protein resides in the nucleus. Functionally, probable transcription factor. Modulates lifespan and also recovery from the developmentally arrested larval state known as dauer, perhaps acting upstream of phosphatase PTEN/daf-18. Regulates expression of genes involved in cell division, cell-cycle regulation, and sexual reproduction, including daf-18. The sequence is that of Helix-loop-helix protein 25 from Caenorhabditis elegans.